The following is a 63-amino-acid chain: Large ribosomal subunit protein bL28 (63 aa).

Positions 1 to 20 (MSRRCAITGKGPMVGNNVSH) are disordered.

This sequence belongs to the bacterial ribosomal protein bL28 family.

This Campylobacter curvus (strain 525.92) protein is Large ribosomal subunit protein bL28.